A 189-amino-acid chain; its full sequence is Putative manganese efflux pump MntP (189 aa).

6 consecutive transmembrane segments (helical) span residues 3 to 23 (PVSL…AAIG), 41 to 61 (IIFG…GQAA), 65 to 85 (VADW…LHMI), 106 to 128 (WILA…GLAF), 141 to 161 (GLAT…LGAV), and 168 to 188 (MVGG…HLSA).

The protein belongs to the MntP (TC 9.B.29) family.

It is found in the cell inner membrane. Its function is as follows. Probably functions as a manganese efflux pump. The sequence is that of Putative manganese efflux pump MntP from Pseudomonas aeruginosa (strain UCBPP-PA14).